The primary structure comprises 523 residues: Sensory neuron membrane protein 1 (523 aa).

Over 1–11 (MQLPRELKYAA) the chain is Cytoplasmic. The helical transmembrane segment at 12 to 32 (IAGGVALFGLIFGWVLFPTIL) threads the bilayer. Residues 33-458 (KSQLKKEMAL…HQLFIPKRVV (426 aa)) are Extracellular-facing. N67 and N229 each carry an N-linked (GlcNAc...) asparagine glycan. 3 disulfide bridges follow: C268–C333, C297–C352, and C335–C341. The N-linked (GlcNAc...) asparagine glycan is linked to N440. The helical transmembrane segment at 459–479 (GVLRWWMVSFGSLGAVIGIVF) threads the bilayer. Residues 480-523 (HFRDHIMRLAVSGDTKVSKVTPEEEEQKDISVIGQAQEPAKVNI) are Cytoplasmic-facing.

This sequence belongs to the CD36 family.

It is found in the cell membrane. Its function is as follows. Plays an olfactory role that is not restricted to pheromone sensitivity. The protein is Sensory neuron membrane protein 1 of Helicoverpa armigera (Cotton bollworm).